Reading from the N-terminus, the 432-residue chain is 3-phosphoshikimate 1-carboxyvinyltransferase (432 aa).

Residues Lys-23, Ser-24, and Arg-28 each coordinate 3-phosphoshikimate. Lys-23 contacts phosphoenolpyruvate. The phosphoenolpyruvate site is built by Gly-95 and Arg-123. Ser-167, Gln-169, Asp-317, and Lys-344 together coordinate 3-phosphoshikimate. A phosphoenolpyruvate-binding site is contributed by Gln-169. Asp-317 acts as the Proton acceptor in catalysis. Phosphoenolpyruvate-binding residues include Arg-348 and Arg-390.

It belongs to the EPSP synthase family. Monomer.

It localises to the cytoplasm. The catalysed reaction is 3-phosphoshikimate + phosphoenolpyruvate = 5-O-(1-carboxyvinyl)-3-phosphoshikimate + phosphate. It functions in the pathway metabolic intermediate biosynthesis; chorismate biosynthesis; chorismate from D-erythrose 4-phosphate and phosphoenolpyruvate: step 6/7. Catalyzes the transfer of the enolpyruvyl moiety of phosphoenolpyruvate (PEP) to the 5-hydroxyl of shikimate-3-phosphate (S3P) to produce enolpyruvyl shikimate-3-phosphate and inorganic phosphate. The protein is 3-phosphoshikimate 1-carboxyvinyltransferase of Staphylococcus haemolyticus (strain JCSC1435).